We begin with the raw amino-acid sequence, 75 residues long: Putative sulfur carrier protein TsuB (75 aa).

Cys-13 acts as the Cysteine persulfide intermediate in catalysis.

This sequence belongs to the sulfur carrier protein TusA family.

Its function is as follows. Involved in thiosulfate metabolism. In Escherichia coli (strain K12), this protein is Putative sulfur carrier protein TsuB.